Reading from the N-terminus, the 267-residue chain is Corrinoid adenosyltransferase EutT (267 aa).

Positions 80 and 83 each coordinate a divalent metal cation.

This sequence belongs to the Cob(I)alamin adenosyltransferase family. EutT subfamily. Homodimer. A divalent metal cation serves as cofactor.

The protein resides in the bacterial microcompartment. The catalysed reaction is 2 cob(II)alamin + reduced [electron-transfer flavoprotein] + 2 ATP + 2 H2O = 2 adenosylcob(III)alamin + oxidized [electron-transfer flavoprotein] + 2 phosphate + 2 diphosphate + 3 H(+). It catalyses the reaction 2 cob(II)inamide + reduced [electron-transfer flavoprotein] + 2 ATP + 2 H2O = 2 adenosylcob(III)inamide + oxidized [electron-transfer flavoprotein] + 2 phosphate + 2 diphosphate + 3 H(+). Its pathway is amine and polyamine degradation; ethanolamine degradation. In terms of biological role, converts cyanocobalamin (CN-B12) to adenosylcobalamin (AdoCbl), the inducer of the eut operon. Is not active on cobinamide nor other intermediates in the adenosylcobalamin synthetic pathway. Allows full induction of the eut operon. Can use ADP, CTP and dATP in place of ATP, and cobinamide in place of cobalamin, none are as efficiently used as ATP and cobalamin. Functionally, expression of the eut operon allows this bacteria to use ethanolamine (EA) as a carbon, nitrogen and energy source. It relies on cobalamin (vitamin B12) both as a cofactor for the ethanolamine ammonia-lyase (EAL) activity and to induce the operon. EA enhances bacterial survival in macrophages in a concentration-dependent manner, suggesting it is an important nutrient during infection. The sequence is that of Corrinoid adenosyltransferase EutT from Salmonella typhimurium (strain LT2 / SGSC1412 / ATCC 700720).